The primary structure comprises 642 residues: Threonine--tRNA ligase (642 aa).

In terms of domain architecture, TGS spans 1 to 61 (MPVITLPDGS…ETDSELSIIT (61 aa)). Residues 243–534 (DHRKIGKQLD…LIEEYAGKFP (292 aa)) form a catalytic region. Zn(2+) is bound by residues cysteine 334, histidine 385, and histidine 511.

It belongs to the class-II aminoacyl-tRNA synthetase family. In terms of assembly, homodimer. Zn(2+) is required as a cofactor.

It localises to the cytoplasm. The enzyme catalyses tRNA(Thr) + L-threonine + ATP = L-threonyl-tRNA(Thr) + AMP + diphosphate + H(+). In terms of biological role, catalyzes the attachment of threonine to tRNA(Thr) in a two-step reaction: L-threonine is first activated by ATP to form Thr-AMP and then transferred to the acceptor end of tRNA(Thr). Also edits incorrectly charged L-seryl-tRNA(Thr). This chain is Threonine--tRNA ligase, found in Shewanella halifaxensis (strain HAW-EB4).